Reading from the N-terminus, the 378-residue chain is Chaperone protein DnaJ (378 aa).

The region spanning 5–72 is the J domain; that stretch reads DFYEVLGVPK…QKRAAYDQFG (68 aa). A CR-type zinc finger spans residues 138-216; that stretch reads GKEAQIRIPS…CHGQGKVKKQ (79 aa). Zn(2+) is bound by residues Cys151, Cys154, Cys168, Cys171, Cys190, Cys193, Cys204, and Cys207. CXXCXGXG motif repeat units lie at residues 151-158, 168-175, 190-197, and 204-211; these read CETCHGSG, CTTCSGTG, CPHCRGTG, and CVTCHGQG. Residues 354–378 are disordered; the sequence is SLKKGGGKHSPSGESWTDRLKNLFT. A compositionally biased stretch (basic and acidic residues) spans 369 to 378; it reads WTDRLKNLFT.

This sequence belongs to the DnaJ family. In terms of assembly, homodimer. It depends on Zn(2+) as a cofactor.

The protein localises to the cytoplasm. Participates actively in the response to hyperosmotic and heat shock by preventing the aggregation of stress-denatured proteins and by disaggregating proteins, also in an autonomous, DnaK-independent fashion. Unfolded proteins bind initially to DnaJ; upon interaction with the DnaJ-bound protein, DnaK hydrolyzes its bound ATP, resulting in the formation of a stable complex. GrpE releases ADP from DnaK; ATP binding to DnaK triggers the release of the substrate protein, thus completing the reaction cycle. Several rounds of ATP-dependent interactions between DnaJ, DnaK and GrpE are required for fully efficient folding. Also involved, together with DnaK and GrpE, in the DNA replication of plasmids through activation of initiation proteins. In Paracidovorax citrulli (strain AAC00-1) (Acidovorax citrulli), this protein is Chaperone protein DnaJ.